Reading from the N-terminus, the 61-residue chain is Large ribosomal subunit protein bL28 (61 aa).

The interval 1–24 is disordered; it reads MAKDYVTGKKTTFGNKRSHSLNPT. The span at 9–23 shows a compositional bias: polar residues; the sequence is KKTTFGNKRSHSLNP.

This sequence belongs to the bacterial ribosomal protein bL28 family.

This is Large ribosomal subunit protein bL28 from Lactobacillus acidophilus (strain ATCC 700396 / NCK56 / N2 / NCFM).